The following is a 197-amino-acid chain: 7-methyl-GTP pyrophosphatase (197 aa).

Asp-69 serves as the catalytic Proton acceptor.

It belongs to the Maf family. YceF subfamily. The cofactor is a divalent metal cation.

It is found in the cytoplasm. It carries out the reaction N(7)-methyl-GTP + H2O = N(7)-methyl-GMP + diphosphate + H(+). In terms of biological role, nucleoside triphosphate pyrophosphatase that hydrolyzes 7-methyl-GTP (m(7)GTP). May have a dual role in cell division arrest and in preventing the incorporation of modified nucleotides into cellular nucleic acids. This Pectobacterium atrosepticum (strain SCRI 1043 / ATCC BAA-672) (Erwinia carotovora subsp. atroseptica) protein is 7-methyl-GTP pyrophosphatase.